A 119-amino-acid chain; its full sequence is Large ribosomal subunit protein uL18 (119 aa).

It belongs to the universal ribosomal protein uL18 family. In terms of assembly, part of the 50S ribosomal subunit; part of the 5S rRNA/L5/L18/L25 subcomplex. Contacts the 5S and 23S rRNAs.

This is one of the proteins that bind and probably mediate the attachment of the 5S RNA into the large ribosomal subunit, where it forms part of the central protuberance. This is Large ribosomal subunit protein uL18 from Borrelia recurrentis (strain A1).